Consider the following 129-residue polypeptide: MAEKPTAKPKAAEAKDQSDSYAIVEASGQQFLLQPNRYYDLDRLQAAVDDTVTLEKVLLIKDGKNDATVGQPYVKGASVELKVMDHRRGPKIIVYKMRPKKKTRRKNGHRQELTRVMVQSISIDGKALS.

This sequence belongs to the bacterial ribosomal protein bL21 family. As to quaternary structure, part of the 50S ribosomal subunit. Contacts protein L20.

Its function is as follows. This protein binds to 23S rRNA in the presence of protein L20. The chain is Large ribosomal subunit protein bL21 from Prochlorococcus marinus (strain MIT 9313).